The sequence spans 94 residues: Aspartyl/glutamyl-tRNA(Asn/Gln) amidotransferase subunit C (94 aa).

The protein belongs to the GatC family. As to quaternary structure, heterotrimer of A, B and C subunits.

The enzyme catalyses L-glutamyl-tRNA(Gln) + L-glutamine + ATP + H2O = L-glutaminyl-tRNA(Gln) + L-glutamate + ADP + phosphate + H(+). The catalysed reaction is L-aspartyl-tRNA(Asn) + L-glutamine + ATP + H2O = L-asparaginyl-tRNA(Asn) + L-glutamate + ADP + phosphate + 2 H(+). In terms of biological role, allows the formation of correctly charged Asn-tRNA(Asn) or Gln-tRNA(Gln) through the transamidation of misacylated Asp-tRNA(Asn) or Glu-tRNA(Gln) in organisms which lack either or both of asparaginyl-tRNA or glutaminyl-tRNA synthetases. The reaction takes place in the presence of glutamine and ATP through an activated phospho-Asp-tRNA(Asn) or phospho-Glu-tRNA(Gln). The sequence is that of Aspartyl/glutamyl-tRNA(Asn/Gln) amidotransferase subunit C from Carboxydothermus hydrogenoformans (strain ATCC BAA-161 / DSM 6008 / Z-2901).